A 404-amino-acid chain; its full sequence is CD2 homolog (404 aa).

The N-terminal stretch at 1–16 is a signal peptide; it reads MFITLIFLSYINIVLS. Over 17 to 225 the chain is Extracellular; that stretch reads NNYWARLNET…QNYFLENIHT (209 aa). Asparagine 24, asparagine 87, asparagine 92, asparagine 96, asparagine 122, asparagine 139, asparagine 167, asparagine 193, asparagine 200, and asparagine 206 each carry an N-linked (GlcNAc...) asparagine; by host glycan. Intrachain disulfides connect cysteine 140/cysteine 207 and cysteine 147/cysteine 190. Residues 226–246 form a helical membrane-spanning segment; the sequence is LFYIIIFIVSGLIASIFISII. At 247 to 404 the chain is on the cytoplasmic side; that stretch reads TFLSLRKRKK…ISLIHVDRII (158 aa). A disordered region spans residues 260–295; that stretch reads EIESPPPESNEEEQCQHDDTTSIHEPSPREPLLPKP. Positions 273 to 287 are enriched in basic and acidic residues; the sequence is QCQHDDTTSIHEPSP. A run of 7 repeats spans residues 322–327, 328–333, 334–339, 340–345, 346–351, 352–357, and 358–363. The 7 X 6 AA tandem repeats of [KN]-P-C-P-P-P stretch occupies residues 322–363; it reads NPCPPPKPCPPPKPCPPPKPCPPPKPCPPPKPCPPPKPCPPP. Over residues 357–388 the composition is skewed to pro residues; that stretch reads PKPCPPPKPCSSPESYSPPKPLPSIPLLPNIP. The interval 357–390 is disordered; it reads PKPCPPPKPCSSPESYSPPKPLPSIPLLPNIPPL.

Belongs to the asfivirus CD2 homolog protein family. As to quaternary structure, both glycosylated and nonglycosylated forms interact (via C-terminus) with the host AP-1 complex. Post-translationally, cleaved into two fragments of 63 kDa and 26 kDa containing respectively the glycosylated N-terminus and the nonglycosylated C-terminus. A full-length 89-kDa glycosylated form also exists.

The protein resides in the host membrane. It is found in the virion membrane. Its subcellular location is the host Golgi apparatus. In terms of biological role, may play an immunosuppressive role by inhibiting lymphocyte proliferation and subsequently facilitating viral replication and generalization of infection. Responsible for viral hemadsorption, which may help viral spread. Increases virus replication in the tick vector at the step of virus uptake or replication in the tick gut. May play a role in the host Golgi reorganization to yield viral factories. May play a role in host cell penetration. The sequence is that of CD2 homolog from African swine fever virus (isolate Tick/South Africa/Pretoriuskop Pr4/1996) (ASFV).